A 172-amino-acid polypeptide reads, in one-letter code: MVDKRESYTKEDLLASGRGELFGAKGPQLPAPNMLMMDRVVKMTETGGNYDKGYVEAELDINPDLWFFGCHFIGDPVMPGCLGLDAMWQLVGFYLGWLGGEGKGRALGVGEVKFTGQVLPTAKKVTYRIHFKRIVNRRLIMGLADGEVLVDGRLIYTASDLKVGLFQDTSSF.

The active site involves histidine 71.

This sequence belongs to the thioester dehydratase family. FabA subfamily. In terms of assembly, homodimer.

Its subcellular location is the cytoplasm. The catalysed reaction is a (3R)-hydroxyacyl-[ACP] = a (2E)-enoyl-[ACP] + H2O. It catalyses the reaction (3R)-hydroxydecanoyl-[ACP] = (2E)-decenoyl-[ACP] + H2O. The enzyme catalyses (2E)-decenoyl-[ACP] = (3Z)-decenoyl-[ACP]. The protein operates within lipid metabolism; fatty acid biosynthesis. Its function is as follows. Necessary for the introduction of cis unsaturation into fatty acids. Catalyzes the dehydration of (3R)-3-hydroxydecanoyl-ACP to E-(2)-decenoyl-ACP and then its isomerization to Z-(3)-decenoyl-ACP. Can catalyze the dehydratase reaction for beta-hydroxyacyl-ACPs with saturated chain lengths up to 16:0, being most active on intermediate chain length. In Escherichia fergusonii (strain ATCC 35469 / DSM 13698 / CCUG 18766 / IAM 14443 / JCM 21226 / LMG 7866 / NBRC 102419 / NCTC 12128 / CDC 0568-73), this protein is 3-hydroxydecanoyl-[acyl-carrier-protein] dehydratase.